A 451-amino-acid polypeptide reads, in one-letter code: V-type proton ATPase subunit S1 (451 aa).

The first 16 residues, 1–16, serve as a signal peptide directing secretion; it reads MRVLFAVFSLIMACQA. The Lumenal portion of the chain corresponds to 17-407; the sequence is YDAVLFSNSR…DCTGTFSSGS (391 aa). Asn-191, Asn-235, Asn-249, and Asn-330 each carry an N-linked (GlcNAc...) asparagine glycan. A helical membrane pass occupies residues 408-428; the sequence is WMGIVSALVLIAGLMFGYVML. The Cytoplasmic segment spans residues 429 to 451; the sequence is QSVQTMDRFDDPKQRQIVINVRE.

This sequence belongs to the vacuolar ATPase subunit S1 family. In terms of assembly, accessory component of the multisubunit proton-transporting vacuolar (V)-ATPase protein pump. As to expression, expressed in pharynx, hypodermis, intestine, vulval hypodermis and the H-shape excretory cell.

Its subcellular location is the membrane. Its function is as follows. Accessory subunit of the proton-transporting vacuolar (V)-ATPase protein pump, which is required for luminal acidification of secretory vesicles. In the germline, required for the trafficking of the receptor RME-2 to the oocyte cell membrane where it regulates the uptake of yolk proteins. Also, plays an essential role in osmoregulation in the embryo, probably by regulating the proper formation of the eggshell. This Caenorhabditis elegans protein is V-type proton ATPase subunit S1.